Consider the following 240-residue polypeptide: 1-(5-phosphoribosyl)-5-[(5-phosphoribosylamino)methylideneamino] imidazole-4-carboxamide isomerase (240 aa).

Asp-8 acts as the Proton acceptor in catalysis. The active-site Proton donor is the Asp-129.

It belongs to the HisA/HisF family.

Its subcellular location is the cytoplasm. It carries out the reaction 1-(5-phospho-beta-D-ribosyl)-5-[(5-phospho-beta-D-ribosylamino)methylideneamino]imidazole-4-carboxamide = 5-[(5-phospho-1-deoxy-D-ribulos-1-ylimino)methylamino]-1-(5-phospho-beta-D-ribosyl)imidazole-4-carboxamide. The protein operates within amino-acid biosynthesis; L-histidine biosynthesis; L-histidine from 5-phospho-alpha-D-ribose 1-diphosphate: step 4/9. This chain is 1-(5-phosphoribosyl)-5-[(5-phosphoribosylamino)methylideneamino] imidazole-4-carboxamide isomerase, found in Herpetosiphon aurantiacus (strain ATCC 23779 / DSM 785 / 114-95).